The chain runs to 54 residues: UPF0434 protein BCI_0256 (54 aa).

It belongs to the UPF0434 family.

This Baumannia cicadellinicola subsp. Homalodisca coagulata protein is UPF0434 protein BCI_0256.